Here is a 158-residue protein sequence, read N- to C-terminus: Endoribonuclease YbeY (158 aa).

3 residues coordinate Zn(2+): H119, H123, and D129.

It belongs to the endoribonuclease YbeY family. The cofactor is Zn(2+).

Its subcellular location is the cytoplasm. Functionally, single strand-specific metallo-endoribonuclease involved in late-stage 70S ribosome quality control and in maturation of the 3' terminus of the 16S rRNA. This chain is Endoribonuclease YbeY, found in Chlamydia caviae (strain ATCC VR-813 / DSM 19441 / 03DC25 / GPIC) (Chlamydophila caviae).